A 134-amino-acid chain; its full sequence is ATP synthase epsilon chain, chloroplastic (134 aa).

This sequence belongs to the ATPase epsilon chain family. F-type ATPases have 2 components, CF(1) - the catalytic core - and CF(0) - the membrane proton channel. CF(1) has five subunits: alpha(3), beta(3), gamma(1), delta(1), epsilon(1). CF(0) has three main subunits: a, b and c.

The protein resides in the plastid. The protein localises to the chloroplast thylakoid membrane. Produces ATP from ADP in the presence of a proton gradient across the membrane. This chain is ATP synthase epsilon chain, chloroplastic, found in Gracilaria tenuistipitata var. liui (Red alga).